Consider the following 170-residue polypeptide: 4-hydroxyphenylacetate 3-monooxygenase reductase component (170 aa).

It belongs to the non-flavoprotein flavin reductase family. HpaC subfamily. As to quaternary structure, homodimer. 4-HPA 3-monooxygenase consists of a reductase component HpaC and an oxygenase component HpaB.

It catalyses the reaction a reduced flavin + NAD(+) = an oxidized flavin + NADH + 2 H(+). Its pathway is aromatic compound metabolism; 4-hydroxyphenylacetate degradation; pyruvate and succinate semialdehyde from 4-hydroxyphenylacetate: step 1/7. In terms of biological role, catalyzes the reduction of free flavins (FMN, FAD and riboflavin) by NADH. Subsequently, the reduced flavins diffuse to the large HpaB component or to other electron acceptors such as cytochrome c and Fe(3+) ion. The protein is 4-hydroxyphenylacetate 3-monooxygenase reductase component (hpaC) of Salmonella dublin.